The primary structure comprises 91 residues: Small ribosomal subunit protein bS20 (91 aa).

Positions 1-28 (MPNIKSAIKRTKTIEKRRAHRASQKSDL) are disordered. The segment covering 7–23 (AIKRTKTIEKRRAHRAS) has biased composition (basic residues).

Belongs to the bacterial ribosomal protein bS20 family.

Binds directly to 16S ribosomal RNA. This is Small ribosomal subunit protein bS20 from Brevibacillus brevis (strain 47 / JCM 6285 / NBRC 100599).